We begin with the raw amino-acid sequence, 1017 residues long: NLR family CARD domain-containing protein 4 (1017 aa).

In terms of domain architecture, CARD spans methionine 1–serine 88. Residues glutamate 95–glycine 298 form a nucleotide-binding domain (NBD) region. An NACHT domain is found at serine 163–lysine 476. Glycine 169–serine 176 lines the ATP pocket. The winged-helix domain (WHD) stretch occupies residues serine 356–glutamate 463. Serine 533 is modified (phosphoserine). 12 LRR repeats span residues phenylalanine 578–phenylalanine 598, lysine 649–tyrosine 672, valine 728–asparagine 751, leucine 755–glutamate 778, leucine 780–valine 805, glutamate 817–leucine 840, alanine 841–glutamine 863, leucine 871–glutamine 895, lysine 904–lysine 926, leucine 929–asparagine 956, lysine 958–arginine 978, and glutamate 992–leucine 1014.

Homooligomer; homooligomerizes following activation of Naip proteins by pathogenic proteins such as S.typhimurium (Salmonella) flagellin or PrgJ. Component of the NLRC4 inflammasome, at least composed of NLRC4, caspase-1 (CASP1) and some NAIP family member. Interacts with EIF2AK2/PKR. Phosphorylated at Ser-533 following infection of macrophages with S.typhimurium (Salmonella). Phosphorylation is essential for NLRC4 inflammasome function to promote caspase-1 activation and pyroptosis. PRKCD phosphorylates Ser-533 in vitro.

It localises to the cytoplasm. The protein resides in the cytosol. Functionally, key component of inflammasomes that indirectly senses specific proteins from pathogenic bacteria and fungi and responds by assembling an inflammasome complex that promotes caspase-1 activation, cytokine production and macrophage pyroptosis. The NLRC4 inflammasome is activated as part of the innate immune response to a range of intracellular bacteria. The sequence is that of NLR family CARD domain-containing protein 4 (NLRC4) from Bos taurus (Bovine).